The following is a 315-amino-acid chain: tRNA dimethylallyltransferase (315 aa).

Residue 11–18 (GPTASGKS) coordinates ATP. 13-18 (TASGKS) contributes to the substrate binding site. 2 interaction with substrate tRNA regions span residues 36 to 39 (DSMQ) and 160 to 164 (QRLIR).

It belongs to the IPP transferase family. Monomer. It depends on Mg(2+) as a cofactor.

It carries out the reaction adenosine(37) in tRNA + dimethylallyl diphosphate = N(6)-dimethylallyladenosine(37) in tRNA + diphosphate. Functionally, catalyzes the transfer of a dimethylallyl group onto the adenine at position 37 in tRNAs that read codons beginning with uridine, leading to the formation of N6-(dimethylallyl)adenosine (i(6)A). This chain is tRNA dimethylallyltransferase, found in Rickettsia bellii (strain OSU 85-389).